A 393-amino-acid chain; its full sequence is Isocitrate dehydrogenase [NAD] subunit gamma 1, mitochondrial (393 aa).

Residues Met1 to Ile39 constitute a mitochondrion transit peptide. Thr120 contacts citrate. Ser130 is modified (phosphoserine). Residue Asn133 participates in citrate binding. Positions 136 and 167 each coordinate substrate. Lys206 is subject to N6-acetyllysine. Lys226 bears the N6-succinyllysine mark. Asp254 contacts substrate. Asp254 serves as a coordination point for Mn(2+). ADP-binding residues include Asn312, Thr313, and Asn324.

Belongs to the isocitrate and isopropylmalate dehydrogenases family. In terms of assembly, heterooligomer of subunits alpha (IDH3A), beta (IDH3B), and gamma (IDH3G) in the apparent ratio of 2:1:1. The heterodimer containing one IDH3A and one IDH3B subunit and the heterodimer containing one IDH3A and one IDH3G subunit assemble into a heterotetramer (which contains two subunits of IDH3A, one of IDH3B and one of IDH3G) and further into the heterooctamer. Requires Mg(2+) as cofactor. Mn(2+) is required as a cofactor.

The protein resides in the mitochondrion. With respect to regulation, the heterotetramer and the heterodimer composed of IDH3A and IDH3G subunits can be allosterically activated by citrate (CIT) or/and ADP, and the two activators can act independently or synergistically. The heterodimer composed of IDH3A and IDH3B subunits cannot be allosterically regulated and the allosteric regulation of the heterotetramer is through the IDH3G subunit and not the IDH3B subunit. The IDH3G subunit contains the allosteric site which consists of a CIT-binding site and an ADP-binding site, and the binding of CIT and ADP causes conformational changes at the allosteric site which are transmitted to the active site in the catalytic subunit (IDH3A) through a cascade of conformational changes at the heterodimer interface, leading to stabilization of the isocitrate-binding at the active site and thus activation of the enzyme. ATP can activate the heterotetramer and the heterodimer composed of IDH3A and IDH3G subunits at low concentrations but inhibits their activities at high concentrations, whereas ATP exhibits only inhibitory effect on the heterodimer composed of IDH3A and IDH3B subunits. Its function is as follows. Regulatory subunit which plays a role in the allosteric regulation of the enzyme catalyzing the decarboxylation of isocitrate (ICT) into alpha-ketoglutarate. The heterodimer composed of the alpha (IDH3A) and beta (IDH3B) subunits and the heterodimer composed of the alpha (IDH3A) and gamma (IDH3G) subunits, have considerable basal activity but the full activity of the heterotetramer (containing two subunits of IDH3A, one of IDH3B and one of IDH3G) requires the assembly and cooperative function of both heterodimers. The protein is Isocitrate dehydrogenase [NAD] subunit gamma 1, mitochondrial (Idh3g) of Rattus norvegicus (Rat).